The sequence spans 294 residues: Glucosamine kinase GspK (294 aa).

T12 is an ATP binding site. D101 serves as a coordination point for substrate. T122 is an ATP binding site. Substrate is bound by residues 139–141 (GRE) and D146. Position 202 (G202) interacts with ATP.

This sequence belongs to the eukaryotic-type N-acetylglucosamine kinase family.

The protein localises to the cytoplasm. It catalyses the reaction D-glucosamine + ATP = D-glucosamine 6-phosphate + ADP + H(+). ATP-dependent kinase, which is specific for glucosamine. Does not show kinase activity with any other sugar. The chain is Glucosamine kinase GspK (gspK) from Vibrio cholerae serotype O1 (strain ATCC 39315 / El Tor Inaba N16961).